The chain runs to 342 residues: Anthranilate phosphoribosyltransferase (342 aa).

Residues G90, 93-94 (GD), T98, 100-103 (NIST), 118-126 (KHGNRSVSS), and A130 each bind 5-phospho-alpha-D-ribose 1-diphosphate. Residue G90 participates in anthranilate binding. S102 is a binding site for Mg(2+). N121 contributes to the anthranilate binding site. R176 is a binding site for anthranilate. The Mg(2+) site is built by D234 and E235.

Belongs to the anthranilate phosphoribosyltransferase family. In terms of assembly, homodimer. The cofactor is Mg(2+).

The catalysed reaction is N-(5-phospho-beta-D-ribosyl)anthranilate + diphosphate = 5-phospho-alpha-D-ribose 1-diphosphate + anthranilate. It participates in amino-acid biosynthesis; L-tryptophan biosynthesis; L-tryptophan from chorismate: step 2/5. Its function is as follows. Catalyzes the transfer of the phosphoribosyl group of 5-phosphorylribose-1-pyrophosphate (PRPP) to anthranilate to yield N-(5'-phosphoribosyl)-anthranilate (PRA). The chain is Anthranilate phosphoribosyltransferase from Mannheimia succiniciproducens (strain KCTC 0769BP / MBEL55E).